The following is a 180-amino-acid chain: Ubiquitin-conjugating enzyme E2 20 (180 aa).

Residues 1-33 form a disordered region; sequence MAAVNGYQGNTPADPPASNGSKQPAAPTKTVDS. The region spanning 35–180 is the UBC core domain; that stretch reads SVLKRLQSEL…VEKLYKPPSA (146 aa). The active-site Glycyl thioester intermediate is the Cys-119.

It belongs to the ubiquitin-conjugating enzyme family. In terms of tissue distribution, expressed in all tissues with cell division activities and in mature leaves.

The enzyme catalyses S-ubiquitinyl-[E1 ubiquitin-activating enzyme]-L-cysteine + [E2 ubiquitin-conjugating enzyme]-L-cysteine = [E1 ubiquitin-activating enzyme]-L-cysteine + S-ubiquitinyl-[E2 ubiquitin-conjugating enzyme]-L-cysteine.. It participates in protein modification; protein ubiquitination. Accepts the ubiquitin from the E1 complex and catalyzes its covalent attachment to other proteins. This is Ubiquitin-conjugating enzyme E2 20 (UBC20) from Arabidopsis thaliana (Mouse-ear cress).